A 97-amino-acid chain; its full sequence is Small ribosomal subunit protein bS20 (97 aa).

The protein belongs to the bacterial ribosomal protein bS20 family.

Its function is as follows. Binds directly to 16S ribosomal RNA. In Gloeothece citriformis (strain PCC 7424) (Cyanothece sp. (strain PCC 7424)), this protein is Small ribosomal subunit protein bS20.